A 157-amino-acid polypeptide reads, in one-letter code: Probable succinate transporter subunit YjjB (157 aa).

A run of 4 helical transmembrane segments spans residues 8–28 (LALAQDMILAAIPAVGFAMVF), 50–70 (MILMTSGLNIEWSTFMASMLG), 87–107 (VFTVAAVIPMFPGISAYTAMI), and 129–149 (FLTASSIVGALSIGLSIPGLW).

It belongs to the ThrE exporter (TC 2.A.79) family. The transporter is composed of YjjB and YjjP.

The protein localises to the cell inner membrane. Its function is as follows. Involved in succinate export with YjjP. Both proteins are required for export. In Escherichia coli O157:H7 (strain EC4115 / EHEC), this protein is Probable succinate transporter subunit YjjB.